Here is a 398-residue protein sequence, read N- to C-terminus: Putative defective protein IntQ (398 aa).

The Core-binding (CB) domain maps to 51-146 (LTIKELAEKF…NLNAVFQFGV (96 aa)). Residues 167–378 (TIPDPLSREE…SENNNAQVAL (212 aa)) form the Tyr recombinase domain. Catalysis depends on residues Arg202, Lys236, Arg331, and His354. Catalysis depends on Tyr364, which acts as the O-(3'-phospho-DNA)-tyrosine intermediate.

The protein belongs to the 'phage' integrase family.

Integrase is necessary for integration of the phage into the host genome by site-specific recombination. In conjunction with excisionase, integrase is also necessary for excision of the prophage from the host genome. The chain is Putative defective protein IntQ (intQ) from Escherichia coli (strain K12).